The primary structure comprises 360 residues: Hyaluronan and proteoglycan link protein 3 (360 aa).

An N-terminal signal peptide occupies residues 1-17; the sequence is MGLLLLVPLLLLPGSYG. The Ig-like V-type domain occupies 48-164; that stretch reads KLVVETPEET…ESGLVELELR (117 aa). Cystine bridges form between Cys70–Cys146, Cys188–Cys259, Cys212–Cys233, Cys286–Cys356, and Cys311–Cys332. Link domains follow at residues 166 to 261 and 266 to 358; these read VVFP…FCFA and GRVY…YCYR.

It belongs to the HAPLN family. In terms of tissue distribution, widely expressed with highest levels in spleen and placenta.

The protein localises to the secreted. Its subcellular location is the extracellular space. It is found in the extracellular matrix. Functionally, may function in hyaluronic acid binding. The sequence is that of Hyaluronan and proteoglycan link protein 3 (HAPLN3) from Homo sapiens (Human).